Consider the following 306-residue polypeptide: Tyrosine recombinase XerD (306 aa).

In terms of domain architecture, Core-binding (CB) spans Met-1–Ile-83. A Tyr recombinase domain is found at Lys-104–Leu-299. Active-site residues include Arg-145, Lys-176, His-251, Arg-254, and His-277. The O-(3'-phospho-DNA)-tyrosine intermediate role is filled by Tyr-286.

It belongs to the 'phage' integrase family. XerD subfamily. In terms of assembly, forms a cyclic heterotetrameric complex composed of two molecules of XerC and two molecules of XerD.

Its subcellular location is the cytoplasm. Functionally, site-specific tyrosine recombinase, which acts by catalyzing the cutting and rejoining of the recombining DNA molecules. The XerC-XerD complex is essential to convert dimers of the bacterial chromosome into monomers to permit their segregation at cell division. It also contributes to the segregational stability of plasmids. The polypeptide is Tyrosine recombinase XerD (Rickettsia conorii (strain ATCC VR-613 / Malish 7)).